Consider the following 339-residue polypeptide: Ketol-acid reductoisomerase (NADP(+)) (339 aa).

The region spanning 1–182 (MRVYYDRDAD…GGGRSGIIET (182 aa)) is the KARI N-terminal Rossmann domain. NADP(+) contacts are provided by residues 24 to 27 (YGSQ), Lys48, Ser51, Thr53, and 83 to 86 (DELQ). Residue His108 is part of the active site. Position 134 (Gly134) interacts with NADP(+). The region spanning 183 to 328 (NFREECETDL…AKLRGMMPWI (146 aa)) is the KARI C-terminal knotted domain. Residues Asp191, Glu195, Glu227, and Glu231 each coordinate Mg(2+). Ser252 is a binding site for substrate.

The protein belongs to the ketol-acid reductoisomerase family. It depends on Mg(2+) as a cofactor.

The catalysed reaction is (2R)-2,3-dihydroxy-3-methylbutanoate + NADP(+) = (2S)-2-acetolactate + NADPH + H(+). It catalyses the reaction (2R,3R)-2,3-dihydroxy-3-methylpentanoate + NADP(+) = (S)-2-ethyl-2-hydroxy-3-oxobutanoate + NADPH + H(+). The protein operates within amino-acid biosynthesis; L-isoleucine biosynthesis; L-isoleucine from 2-oxobutanoate: step 2/4. It participates in amino-acid biosynthesis; L-valine biosynthesis; L-valine from pyruvate: step 2/4. Its function is as follows. Involved in the biosynthesis of branched-chain amino acids (BCAA). Catalyzes an alkyl-migration followed by a ketol-acid reduction of (S)-2-acetolactate (S2AL) to yield (R)-2,3-dihydroxy-isovalerate. In the isomerase reaction, S2AL is rearranged via a Mg-dependent methyl migration to produce 3-hydroxy-3-methyl-2-ketobutyrate (HMKB). In the reductase reaction, this 2-ketoacid undergoes a metal-dependent reduction by NADPH to yield (R)-2,3-dihydroxy-isovalerate. This Rhizobium johnstonii (strain DSM 114642 / LMG 32736 / 3841) (Rhizobium leguminosarum bv. viciae) protein is Ketol-acid reductoisomerase (NADP(+)).